The sequence spans 567 residues: Oxygen-dependent choline dehydrogenase (567 aa).

4 to 33 serves as a coordination point for FAD; the sequence is DYIIIGAGSAGNVLAARLTEDADVTVLLLE. His-473 functions as the Proton acceptor in the catalytic mechanism.

Belongs to the GMC oxidoreductase family. The cofactor is FAD.

The catalysed reaction is choline + A = betaine aldehyde + AH2. It catalyses the reaction betaine aldehyde + NAD(+) + H2O = glycine betaine + NADH + 2 H(+). It functions in the pathway amine and polyamine biosynthesis; betaine biosynthesis via choline pathway; betaine aldehyde from choline (cytochrome c reductase route): step 1/1. In terms of biological role, involved in the biosynthesis of the osmoprotectant glycine betaine. Catalyzes the oxidation of choline to betaine aldehyde and betaine aldehyde to glycine betaine at the same rate. In Yersinia pestis (strain Pestoides F), this protein is Oxygen-dependent choline dehydrogenase.